Here is a 340-residue protein sequence, read N- to C-terminus: Protein AC11 (340 aa).

In terms of biological role, plays an essential role in nucleocapsid egress from the host nucleus to form the budded virion (BV). Does not participate in nucleocapsid formation. This chain is Protein AC11, found in Autographa californica nuclear polyhedrosis virus (AcMNPV).